The primary structure comprises 327 residues: GMP reductase (327 aa).

Cys-176 (thioimidate intermediate) is an active-site residue. 205–228 contributes to the NADP(+) binding site; that stretch reads IIADGGIRTHGDIAKSIRFGASMV.

It belongs to the IMPDH/GMPR family. GuaC type 2 subfamily.

It catalyses the reaction IMP + NH4(+) + NADP(+) = GMP + NADPH + 2 H(+). Its function is as follows. Catalyzes the irreversible NADPH-dependent deamination of GMP to IMP. It functions in the conversion of nucleobase, nucleoside and nucleotide derivatives of G to A nucleotides, and in maintaining the intracellular balance of A and G nucleotides. In Streptococcus pyogenes serotype M28 (strain MGAS6180), this protein is GMP reductase.